The chain runs to 326 residues: Olfactory receptor 11H12 (326 aa).

Topologically, residues 1-44 (MCPLTLQVTGLMNVSEPNSSFAFVNEFILQGFTCEWTIQIFLFS) are extracellular. N-linked (GlcNAc...) asparagine glycans are attached at residues Asn-13 and Asn-18. Residues 45 to 65 (LFTTTYALTITGNGAIAFVLW) traverse the membrane as a helical segment. Over 66 to 72 (CDWRLHT) the chain is Cytoplasmic. The chain crosses the membrane as a helical span at residues 73–93 (PMYMFLGNFSFLEIWYVSSTV). At 94-112 (PKMLVNFLSEKKNISFAGC) the chain is on the extracellular side. A glycan (N-linked (GlcNAc...) asparagine) is linked at Asn-106. A disulfide bridge links Cys-112 with Cys-194. The helical transmembrane segment at 113 to 133 (FLQFYFFFSLGTSECLLLTVM) threads the bilayer. At 134–158 (AFDQYLAICRPLLYPNIMTGHLCAK) the chain is on the cytoplasmic side. Residues 159-179 (LVILCWVCGFLWFLIPIVLIS) traverse the membrane as a helical segment. Residues 180-216 (QMPFCGPNIIDHVVCDPGPRFALDCVSAPRIQLFCYT) lie on the Extracellular side of the membrane. A helical membrane pass occupies residues 217-237 (LSSLVIFGNFLFIIGSYTLVL). At 238-259 (KAVLGMPSSTGRHKAFSTCGSH) the chain is on the cytoplasmic side. A helical membrane pass occupies residues 260–280 (LAVVSLCYSSLMVMYVSPGLG). Residues 281 to 287 (HSTGMQK) are Extracellular-facing. Residues 288–308 (IETLFYAMVTPLFNPLIYSLQ) traverse the membrane as a helical segment. Residues 309–326 (NKEIKAALRKVLGSSNII) lie on the Cytoplasmic side of the membrane.

The protein belongs to the G-protein coupled receptor 1 family.

Its subcellular location is the cell membrane. Odorant receptor. The sequence is that of Olfactory receptor 11H12 (OR11H12) from Homo sapiens (Human).